The primary structure comprises 172 residues: Transcriptional repressor NrdR (172 aa).

A zinc finger spans residues 3-34 (CPYCRNTDTRVLDSRVADDGGSIRRRRTCSAC). The ATP-cone domain maps to 46-136 (LTVLKRSGAS…VYRAFESADD (91 aa)).

The protein belongs to the NrdR family. Requires Zn(2+) as cofactor.

Functionally, negatively regulates transcription of bacterial ribonucleotide reductase nrd genes and operons by binding to NrdR-boxes. This chain is Transcriptional repressor NrdR, found in Nocardioides sp. (strain ATCC BAA-499 / JS614).